The primary structure comprises 243 residues: Small ribosomal subunit protein uS3 (243 aa).

The region spanning 39–110 (IRTFIQKKYS…QVRINVVEVE (72 aa)) is the KH type-2 domain. The segment at 221 to 243 (GAIPRRKGSRKPQQFEDRSNENS) is disordered. Basic and acidic residues predominate over residues 233–243 (QQFEDRSNENS).

Belongs to the universal ribosomal protein uS3 family. Part of the 30S ribosomal subunit. Forms a tight complex with proteins S10 and S14.

In terms of biological role, binds the lower part of the 30S subunit head. Binds mRNA in the 70S ribosome, positioning it for translation. This chain is Small ribosomal subunit protein uS3, found in Prochlorococcus marinus subsp. pastoris (strain CCMP1986 / NIES-2087 / MED4).